A 517-amino-acid chain; its full sequence is ATP synthase subunit alpha (517 aa).

175–182 provides a ligand contact to ATP; sequence GDRQTGKT.

The protein belongs to the ATPase alpha/beta chains family. As to quaternary structure, F-type ATPases have 2 components, CF(1) - the catalytic core - and CF(0) - the membrane proton channel. CF(1) has five subunits: alpha(3), beta(3), gamma(1), delta(1), epsilon(1). CF(0) has three main subunits: a(1), b(2) and c(9-12). The alpha and beta chains form an alternating ring which encloses part of the gamma chain. CF(1) is attached to CF(0) by a central stalk formed by the gamma and epsilon chains, while a peripheral stalk is formed by the delta and b chains.

It localises to the cell membrane. The enzyme catalyses ATP + H2O + 4 H(+)(in) = ADP + phosphate + 5 H(+)(out). Functionally, produces ATP from ADP in the presence of a proton gradient across the membrane. The alpha chain is a regulatory subunit. In Herpetosiphon aurantiacus (strain ATCC 23779 / DSM 785 / 114-95), this protein is ATP synthase subunit alpha.